The sequence spans 447 residues: Gastrin/cholecystokinin type B receptor (447 aa).

Over Met1 to Arg57 the chain is Extracellular. N-linked (GlcNAc...) asparagine glycans are attached at residues Asn7, Asn30, and Asn36. The helical transmembrane segment at Ile58–Leu79 threads the bilayer. Over Gly80 to Thr87 the chain is Cytoplasmic. The chain crosses the membrane as a helical span at residues Val88–Pro109. At Phe110–Ser131 the chain is on the extracellular side. Cysteines 127 and 205 form a disulfide. The chain crosses the membrane as a helical span at residues Tyr132–Leu150. At Glu151–His170 the chain is on the cytoplasmic side. A helical membrane pass occupies residues Ala171–Tyr189. At Pro190 to Ser219 the chain is on the extracellular side. A helical transmembrane segment spans residues Val220 to Ser242. Topologically, residues Arg243–Arg333 are cytoplasmic. A disordered region spans residues Asp258–Ala285. Residues Met334–Trp355 form a helical membrane-spanning segment. Residues Arg356–Ser373 lie on the Extracellular side of the membrane. Residues Phe374–His394 form a helical membrane-spanning segment. The Cytoplasmic portion of the chain corresponds to Arg395–Gly447. A lipid anchor (S-palmitoyl cysteine) is attached at Cys408.

This sequence belongs to the G-protein coupled receptor 1 family. As to expression, isoform 1 is expressed in brain, pancreas, stomach, the colon cancer cell line LoVo and the T-lymphoblastoma Jurkat, but not in heart, placenta, liver, lung, skeletal muscle, kidney or the stomach cancer cell line AGS. Expressed at high levels in the small cell lung cancer cell line NCI-H510, at lower levels in NCI-H345, NCI-H69 and GLC-28 cell lines, not expressed in GLC-19 cell line. Within the stomach, expressed at high levels in the mucosa of the gastric fundus and at low levels in the antrum and duodenum. Isoform 2 is present in pancreatic cancer cells and colorectal cancer cells, but not in normal pancreas or colonic mucosa. Isoform 3 is expressed in brain, pancreas, stomach, the stomach cancer cell line AGS and the colon cancer cell line LoVo.

It is found in the cell membrane. In terms of biological role, receptor for gastrin and cholecystokinin. The CCK-B receptors occur throughout the central nervous system where they modulate anxiety, analgesia, arousal, and neuroleptic activity. This receptor mediates its action by association with G proteins that activate a phosphatidylinositol-calcium second messenger system. Isoform 2 is constitutively activated and may regulate cancer cell proliferation via a gastrin-independent mechanism. The chain is Gastrin/cholecystokinin type B receptor from Homo sapiens (Human).